The sequence spans 510 residues: Olfactomedin-4 (510 aa).

The signal sequence occupies residues 1–20 (MRPGLSFLLALLFFLGQAAG). Residues N72 and N136 are each glycosylated (N-linked (GlcNAc...) asparagine). Positions 155 to 234 (DFELIKVEVK…ECEASKDQNT (80 aa)) form a coiled coil. An Olfactomedin-like domain is found at 245 to 507 (SCGHGGVVNI…LLNYDLSVLQ (263 aa)). C246 and C437 are disulfide-bonded. An N-linked (GlcNAc...) asparagine glycan is attached at N253.

Homomultimer; disulfide-linked. Interacts with NDUFA13. Interacts with cell surface lectins (locutions ricinus communis agglutinin I, concanavalin-A and wheat germ agglutinin) and cadherin. Post-translationally, N-glycosylated. In terms of tissue distribution, expressed during myeloid lineage development. Much higher expression in bone marrow neutrophils than in peripheral blood neutrophils (at protein level). Strongly expressed in the prostate, small intestine and colon and moderately expressed in the bone marrow and stomach. Overexpressed in some pancreatic cancer tissues.

The protein localises to the secreted. It localises to the extracellular space. Its subcellular location is the mitochondrion. Its function is as follows. May promote proliferation of pancreatic cancer cells by favoring the transition from the S to G2/M phase. In myeloid leukemic cell lines, inhibits cell growth and induces cell differentiation and apoptosis. May play a role in the inhibition of EIF4EBP1 phosphorylation/deactivation. Facilitates cell adhesion, most probably through interaction with cell surface lectins and cadherin. This chain is Olfactomedin-4 (OLFM4), found in Homo sapiens (Human).